We begin with the raw amino-acid sequence, 459 residues long: uncharacterized protein (459 aa).

12 helical membrane-spanning segments follow: residues 25-45, 52-72, 95-115, 123-143, 167-187, 192-212, 249-269, 279-299, 310-330, 332-352, 389-409, and 420-440; these read SYGFGDFGNGFMFDLGQIYLL, AGIPAAMAGGIFLVSKLFAAI, PYLLIGSIVLAVLTVLIFLSP, LIYAYASYMIWGIGYSFVNIP, IGSLGALFITSVAVMPLLVKF, VGYPVVMGLFAALGVFWFYIC, VLMTIFSISAYNIKSAMLVYF, LMAYMNFIIIGSSFLGVVFLP, TAMIGFGISVAADLINFMLPS, VYVFTILASIAFIGISIPNGI, SLSGFLSGIGLGIIGYVPNAV, and ALLLLYPAIALALAMFIIGFL.

The protein belongs to the sodium:galactoside symporter (TC 2.A.2) family.

It localises to the cell membrane. This is an uncharacterized protein from Bacillus subtilis (strain 168).